Reading from the N-terminus, the 251-residue chain is MVEYQVKIDTFEGPLDLLLHLINRLEIDIYDIPVATITEQYLLYVHTMQELELDVASEYLVMAATLLSIKSRMLLPKQEEELFEDEMLEEEDPRDELIEKLIEYRKYKTAAKDLKEREEERQKSFTKPPSDLSEYAKEIKQTEQKLSVTVYDMIGAFQKVLQRKKITRPKETTITRQEIPIEDRMNEIVKSLKTAGRRINFTELFPSRQKDHLVVTFLAVLELMKNQQIIIEQEENFSDIYITGSESIHGA.

The protein belongs to the ScpA family. As to quaternary structure, component of a cohesin-like complex composed of ScpA, ScpB and the Smc homodimer, in which ScpA and ScpB bind to the head domain of Smc. The presence of the three proteins is required for the association of the complex with DNA.

It localises to the cytoplasm. Its function is as follows. Participates in chromosomal partition during cell division. May act via the formation of a condensin-like complex containing Smc and ScpB that pull DNA away from mid-cell into both cell halves. This chain is Segregation and condensation protein A, found in Bacillus velezensis (strain DSM 23117 / BGSC 10A6 / LMG 26770 / FZB42) (Bacillus amyloliquefaciens subsp. plantarum).